The primary structure comprises 274 residues: Phosphatidylglycerol--prolipoprotein diacylglyceryl transferase (274 aa).

4 helical membrane-spanning segments follow: residues 24–44 (WYAL…RFLS), 60–80 (LLVW…VVFY), 96–116 (WHGG…TVLF), and 122–142 (LSVA…LFFG). Arg-143 serves as a coordination point for a 1,2-diacyl-sn-glycero-3-phospho-(1'-sn-glycerol). 3 helical membrane passes run 182-202 (ATLE…FTAL), 207-227 (GQII…AEFF), and 241-261 (VTMG…VFVV).

The protein belongs to the Lgt family.

The protein localises to the cell inner membrane. The enzyme catalyses L-cysteinyl-[prolipoprotein] + a 1,2-diacyl-sn-glycero-3-phospho-(1'-sn-glycerol) = an S-1,2-diacyl-sn-glyceryl-L-cysteinyl-[prolipoprotein] + sn-glycerol 1-phosphate + H(+). It functions in the pathway protein modification; lipoprotein biosynthesis (diacylglyceryl transfer). Functionally, catalyzes the transfer of the diacylglyceryl group from phosphatidylglycerol to the sulfhydryl group of the N-terminal cysteine of a prolipoprotein, the first step in the formation of mature lipoproteins. This Rhodospirillum rubrum (strain ATCC 11170 / ATH 1.1.1 / DSM 467 / LMG 4362 / NCIMB 8255 / S1) protein is Phosphatidylglycerol--prolipoprotein diacylglyceryl transferase.